Reading from the N-terminus, the 349-residue chain is Serine/threonine-protein kinase SRK2A (349 aa).

Positions 12-268 (YELVKDIGSG…IQEIKNHEWF (257 aa)) constitute a Protein kinase domain. Residues 18 to 26 (IGSGNFGVA) and lysine 41 each bind ATP. The Proton acceptor role is filled by aspartate 131. Residues 151-177 (DFGYSKSSLLHSQPKSTVGTPAYIAPE) form an activation loop region.

This sequence belongs to the protein kinase superfamily. Ser/Thr protein kinase family.

The enzyme catalyses L-seryl-[protein] + ATP = O-phospho-L-seryl-[protein] + ADP + H(+). It catalyses the reaction L-threonyl-[protein] + ATP = O-phospho-L-threonyl-[protein] + ADP + H(+). With respect to regulation, activated by osmotic stress and by abscisic acid (ABA). Activation by NaCl is dependent on ABA. Functionally, involved in early responses to osmotic stress. This chain is Serine/threonine-protein kinase SRK2A, found in Physcomitrium patens (Spreading-leaved earth moss).